The primary structure comprises 142 residues: Large ribosomal subunit protein uL23 (142 aa).

It belongs to the universal ribosomal protein uL23 family.

This protein binds to a specific region on the 26S rRNA. The polypeptide is Large ribosomal subunit protein uL23 (RPL25) (Cyberlindnera jadinii (Torula yeast)).